Consider the following 149-residue polypeptide: 18 kDa antigen 1 (149 aa).

The 111-residue stretch at 21-131 folds into the sHSP domain; the sequence is TAARPAVMPM…KPRKIAVGRG (111 aa).

It belongs to the small heat shock protein (HSP20) family.

Its function is as follows. Not known. This protein is one of the major immune reactive proteins in mycobacteria. In Mycobacterium intracellulare, this protein is 18 kDa antigen 1.